Reading from the N-terminus, the 118-residue chain is Large ribosomal subunit protein uL24 (118 aa).

The protein belongs to the universal ribosomal protein uL24 family. Part of the 50S ribosomal subunit.

One of two assembly initiator proteins, it binds directly to the 5'-end of the 23S rRNA, where it nucleates assembly of the 50S subunit. Its function is as follows. One of the proteins that surrounds the polypeptide exit tunnel on the outside of the subunit. The polypeptide is Large ribosomal subunit protein uL24 (Synechococcus sp. (strain WH7803)).